The primary structure comprises 89 residues: MSLGTEEKQNLINTHQVHPTDTGSAEVQVAMLTTRISKLSTHLQGNIHDFSSRQGLLKMIGQRKRLLGYVRSKSEKRYTELIEKLAIRG.

The segment at 1-23 (MSLGTEEKQNLINTHQVHPTDTG) is disordered. The segment covering 10–23 (NLINTHQVHPTDTG) has biased composition (polar residues).

The protein belongs to the universal ribosomal protein uS15 family. As to quaternary structure, part of the 30S ribosomal subunit. Forms a bridge to the 50S subunit in the 70S ribosome, contacting the 23S rRNA.

Its function is as follows. One of the primary rRNA binding proteins, it binds directly to 16S rRNA where it helps nucleate assembly of the platform of the 30S subunit by binding and bridging several RNA helices of the 16S rRNA. In terms of biological role, forms an intersubunit bridge (bridge B4) with the 23S rRNA of the 50S subunit in the ribosome. This Prochlorococcus marinus (strain NATL2A) protein is Small ribosomal subunit protein uS15.